The primary structure comprises 377 residues: Carbamoyl phosphate synthase small chain (377 aa).

The CPSase stretch occupies residues 1-186 (MNTPALLVLA…LGKGFVTPDK (186 aa)). L-glutamine-binding residues include Ser-47, Gly-238, and Gly-240. The region spanning 190–377 (HVVAYDFGVK…IGNMKAAKQA (188 aa)) is the Glutamine amidotransferase type-1 domain. Cys-266 functions as the Nucleophile in the catalytic mechanism. Positions 267, 270, 308, 310, and 311 each coordinate L-glutamine. Residues His-350 and Glu-352 contribute to the active site.

Belongs to the CarA family. Composed of two chains; the small (or glutamine) chain promotes the hydrolysis of glutamine to ammonia, which is used by the large (or ammonia) chain to synthesize carbamoyl phosphate. Tetramer of heterodimers (alpha,beta)4.

The catalysed reaction is hydrogencarbonate + L-glutamine + 2 ATP + H2O = carbamoyl phosphate + L-glutamate + 2 ADP + phosphate + 2 H(+). It carries out the reaction L-glutamine + H2O = L-glutamate + NH4(+). It functions in the pathway amino-acid biosynthesis; L-arginine biosynthesis; carbamoyl phosphate from bicarbonate: step 1/1. The protein operates within pyrimidine metabolism; UMP biosynthesis via de novo pathway; (S)-dihydroorotate from bicarbonate: step 1/3. Small subunit of the glutamine-dependent carbamoyl phosphate synthetase (CPSase). CPSase catalyzes the formation of carbamoyl phosphate from the ammonia moiety of glutamine, carbonate, and phosphate donated by ATP, constituting the first step of 2 biosynthetic pathways, one leading to arginine and/or urea and the other to pyrimidine nucleotides. The small subunit (glutamine amidotransferase) binds and cleaves glutamine to supply the large subunit with the substrate ammonia. The polypeptide is Carbamoyl phosphate synthase small chain (Neisseria gonorrhoeae).